Reading from the N-terminus, the 445-residue chain is Trigger factor (445 aa).

The PPIase FKBP-type domain occupies 166-251; that stretch reads GDVVVVDFVG…AKALKRPVDV (86 aa).

It belongs to the FKBP-type PPIase family. Tig subfamily.

The protein localises to the cytoplasm. It carries out the reaction [protein]-peptidylproline (omega=180) = [protein]-peptidylproline (omega=0). Involved in protein export. Acts as a chaperone by maintaining the newly synthesized protein in an open conformation. Functions as a peptidyl-prolyl cis-trans isomerase. The protein is Trigger factor of Gluconacetobacter diazotrophicus (strain ATCC 49037 / DSM 5601 / CCUG 37298 / CIP 103539 / LMG 7603 / PAl5).